We begin with the raw amino-acid sequence, 794 residues long: Protein sel-1 homolog 1 (794 aa).

An N-terminal signal peptide occupies residues 1–21; that stretch reads MQVRVRLLLLLCAVLLGSAAA. The tract at residues 22–737 is interaction with ERLEC1, OS9 and SYVN1; it reads SSDEETNQDE…DLFTQLDMDQ (716 aa). Topologically, residues 22–738 are lumenal; sequence SSDEETNQDE…LFTQLDMDQL (717 aa). The span at 23–32 shows a compositional bias: acidic residues; that stretch reads SDEETNQDES. Disordered regions lie at residues 23-46 and 73-105; these read SDEE…GSVK and QDEE…KTYE. In terms of domain architecture, Fibronectin type-II spans 122-170; that stretch reads AHGEPCHFPFLFLDKEYDECTSDGREDGRLWCATTYDYKTDEKWGFCET. Disulfide bonds link C127–C153 and C141–C168. 9 Sel1-like repeats span residues 183 to 218, 219 to 254, 255 to 290, 291 to 326, 373 to 409, 410 to 446, 447 to 482, 483 to 518, and 519 to 554; these read AEAI…GMNH, TKAL…EEGS, PKGQ…LGGN, LIAH…NHVA, VQAQ…NAGN, SHAM…DMGN, PVGQ…EQGW, VDGQ…QGGH, and ILAF…ERGR. N-linked (GlcNAc...) asparagine glycosylation is found at N195 and N217. The N-linked (GlcNAc...) asparagine glycan is linked to N272. Positions 352–537 are important for homodimerization and oligomerization; sequence NSGMLEEDLI…MHASGTGVMR (186 aa). N431 is a glycosylation site (N-linked (GlcNAc...) asparagine). N608 is a glycosylation site (N-linked (GlcNAc...) asparagine). 2 Sel1-like repeats span residues 627-662 and 664-699; these read TVAR…EQQH and AQAM…EASP. An interaction with SYVN1 region spans residues 643 to 723; the sequence is TDVDYETAFI…VVYFLQYIRE (81 aa). Residues 738–794 form a mediates retention in the endoplasmic reticulum region; that stretch reads LLGPEWDLYLMTIIALLLGTVIAYRQRQHQDIPVPRPPGPRPAPPQQEGPPEQQPPQ. The helical transmembrane segment at 739–759 threads the bilayer; sequence LGPEWDLYLMTIIALLLGTVI. Topologically, residues 760 to 794 are cytoplasmic; it reads AYRQRQHQDIPVPRPPGPRPAPPQQEGPPEQQPPQ. Positions 767-794 are disordered; that stretch reads QDIPVPRPPGPRPAPPQQEGPPEQQPPQ. Pro residues predominate over residues 771-794; that stretch reads VPRPPGPRPAPPQQEGPPEQQPPQ.

It belongs to the sel-1 family. As to quaternary structure, homodimer and homooligomer. May form a complex with ERLEC1, HSPA5, OS9, and SYVN1. Interacts with FOXRED2 and EDEM1. Interacts with LPL and LMF1; may stabilize the complex formed by LPL and LMF1 and thereby promote the export of LPL dimers. Component of the HRD1 complex, which comprises at least SYNV1/HRD1, DERL1/2, FAM8A1, HERPUD1/HERP, OS9, SEL1L and UBE2J1. SYNV1 assembles with SEL1L and FAM8A1 through its transmembrane domains, but interaction with its cytoplasmic domain is required to confer stability to FAM8A1 and enhance recruitment of HERPUD1. The interaction with SYNV1/HRD1 is direct. Post-translationally, N-glycosylated.

It is found in the endoplasmic reticulum membrane. In terms of biological role, plays a role in the endoplasmic reticulum quality control (ERQC) system also called ER-associated degradation (ERAD) involved in ubiquitin-dependent degradation of misfolded endoplasmic reticulum proteins. Enhances SYVN1 stability. Plays a role in LPL maturation and secretion. Required for normal differentiation of the pancreas epithelium, and for normal exocrine function and survival of pancreatic cells. May play a role in Notch signaling. The sequence is that of Protein sel-1 homolog 1 (Sel1l) from Rattus norvegicus (Rat).